We begin with the raw amino-acid sequence, 331 residues long: Biotin synthase (331 aa).

Residues 39-264 (SELQTCYLVS…VFPQSMVRLA (226 aa)) form the Radical SAM core domain. 3 residues coordinate [4Fe-4S] cluster: Cys54, Cys58, and Cys61. Cys98, Cys130, Cys190, and Arg262 together coordinate [2Fe-2S] cluster.

Belongs to the radical SAM superfamily. Biotin synthase family. Homodimer. Requires [4Fe-4S] cluster as cofactor. [2Fe-2S] cluster is required as a cofactor.

It carries out the reaction (4R,5S)-dethiobiotin + (sulfur carrier)-SH + 2 reduced [2Fe-2S]-[ferredoxin] + 2 S-adenosyl-L-methionine = (sulfur carrier)-H + biotin + 2 5'-deoxyadenosine + 2 L-methionine + 2 oxidized [2Fe-2S]-[ferredoxin]. Its pathway is cofactor biosynthesis; biotin biosynthesis; biotin from 7,8-diaminononanoate: step 2/2. In terms of biological role, catalyzes the conversion of dethiobiotin (DTB) to biotin by the insertion of a sulfur atom into dethiobiotin via a radical-based mechanism. In Chlamydia abortus (strain DSM 27085 / S26/3) (Chlamydophila abortus), this protein is Biotin synthase.